A 599-amino-acid polypeptide reads, in one-letter code: Zinc finger BED domain-containing protein 3 (599 aa).

A disordered region spans residues 70–104; the sequence is LNGGMGSPGNGPGTPLSRNNYAHHHQQHQNQQHVG. The span at 72-81 shows a compositional bias: gly residues; it reads GGMGSPGNGP. Residues 123 to 176 form a BED-type zinc finger; the sequence is VKTAKVWRYFDELPTIEQAAECRICRKKIKATNSSTTGMIRHLRSCHVQEYQLV. Cysteine 144, cysteine 147, histidine 164, and histidine 169 together coordinate Zn(2+). Disordered regions lie at residues 208 to 283 and 440 to 491; these read GIEN…QCQN and ATSS…SSID. 2 stretches are compositionally biased toward low complexity: residues 223–246 and 268–283; these read SQKS…SHFS and SNSI…QCQN. Polar residues predominate over residues 440-455; that stretch reads ATSSYEDVSVNESQMA. Over residues 460–483 the composition is skewed to acidic residues; that stretch reads GDEEEEIMEEEVEEDENVEIEDDT.

In terms of tissue distribution, expressed in neuronal cell bodies in the ventral cord and HSN neurons.

The protein localises to the nucleus. Functionally, probable transcription factor. Involved in vulval organogenesis. During vulval development, may play a role in the regulation of cell cycle regulators such as cul-1. Positively modulates expression of homeobox protein lin-39, perhaps by binding to regulatory regions of the lin-39 gene, acting in the vulval lineage. Plays a role in larval molting. This chain is Zinc finger BED domain-containing protein 3, found in Caenorhabditis elegans.